Consider the following 102-residue polypeptide: Large ribosomal subunit protein bL21 (102 aa).

It belongs to the bacterial ribosomal protein bL21 family. In terms of assembly, part of the 50S ribosomal subunit. Contacts protein L20.

Functionally, this protein binds to 23S rRNA in the presence of protein L20. This is Large ribosomal subunit protein bL21 from Lachnoclostridium phytofermentans (strain ATCC 700394 / DSM 18823 / ISDg) (Clostridium phytofermentans).